We begin with the raw amino-acid sequence, 66 residues long: Ocellatin-PT4 (66 aa).

The signal sequence occupies residues 1 to 22 (MAFLKKSLFLVLFLGLVSLSIC). Residues 23 to 39 (DEEKRQDEDDDDDDDEE) constitute a propeptide that is removed on maturation. Valine amide is present on V66.

Expressed by the skin glands.

It is found in the secreted. Its function is as follows. Has antibacterial activity against Gram-negative bacteria E.coli ATCC 25922 (MIC=80 uM), K.pneumoniae ATCC 700603 (MIC=310 uM) and S.choleraesuis ATCC 14028 (MIC=310 uM). Shows no hemolytic activity and no cytotoxicity. This chain is Ocellatin-PT4, found in Leptodactylus pustulatus (Ceara white-lipped frog).